Reading from the N-terminus, the 408-residue chain is Phosphoglycerate kinase (408 aa).

Substrate is bound by residues Asp-22–Asn-24, Arg-39, His-60–Arg-63, Arg-117, and Arg-157. Residues Glu-332 and Gly-358–Thr-361 each bind ATP.

It belongs to the phosphoglycerate kinase family. Monomer.

The protein localises to the cytoplasm. The enzyme catalyses (2R)-3-phosphoglycerate + ATP = (2R)-3-phospho-glyceroyl phosphate + ADP. It functions in the pathway carbohydrate degradation; glycolysis; pyruvate from D-glyceraldehyde 3-phosphate: step 2/5. The protein is Phosphoglycerate kinase (pgk) of Thermoplasma acidophilum (strain ATCC 25905 / DSM 1728 / JCM 9062 / NBRC 15155 / AMRC-C165).